Reading from the N-terminus, the 172-residue chain is Bifunctional protein PyrR (172 aa).

A PRPP-binding motif is present at residues 90 to 102; it reads LVLVDDVLMSGRT.

This sequence belongs to the purine/pyrimidine phosphoribosyltransferase family. PyrR subfamily.

It catalyses the reaction UMP + diphosphate = 5-phospho-alpha-D-ribose 1-diphosphate + uracil. Its function is as follows. Regulates the transcription of the pyrimidine nucleotide (pyr) operon in response to exogenous pyrimidines. Also displays a weak uracil phosphoribosyltransferase activity which is not physiologically significant. In Pseudomonas entomophila (strain L48), this protein is Bifunctional protein PyrR.